Here is a 78-residue protein sequence, read N- to C-terminus: MLILTRRPGESLYLGENIRITVLGMQGKQVKLGLEVPGDTTVYREEVYKRVVEENRRALETSNNDLMVAAELWHETKK.

This sequence belongs to the CsrA/RsmA family. Homodimer; the beta-strands of each monomer intercalate to form a hydrophobic core, while the alpha-helices form wings that extend away from the core.

It localises to the cytoplasm. A translational regulator that binds mRNA to regulate translation initiation and/or mRNA stability. Usually binds in the 5'-UTR at or near the Shine-Dalgarno sequence preventing ribosome-binding, thus repressing translation. Its main target seems to be the major flagellin gene, while its function is anatagonized by FliW. This chain is Translational regulator CsrA, found in Desulfovibrio desulfuricans (strain ATCC 27774 / DSM 6949 / MB).